Consider the following 168-residue polypeptide: Peptide deformylase (168 aa).

Fe cation is bound by residues C92 and H134. The active site involves E135. H138 provides a ligand contact to Fe cation.

This sequence belongs to the polypeptide deformylase family. The cofactor is Fe(2+).

The catalysed reaction is N-terminal N-formyl-L-methionyl-[peptide] + H2O = N-terminal L-methionyl-[peptide] + formate. In terms of biological role, removes the formyl group from the N-terminal Met of newly synthesized proteins. Requires at least a dipeptide for an efficient rate of reaction. N-terminal L-methionine is a prerequisite for activity but the enzyme has broad specificity at other positions. This is Peptide deformylase from Hahella chejuensis (strain KCTC 2396).